Consider the following 89-residue polypeptide: RNA-binding protein Hfq (89 aa).

One can recognise a Sm domain in the interval 9–68 (DPFLNALRRERVPVSIYLVNGIKLQGQVESFDQFVILLKNTVSQMVYKHAISTVVPARAL).

The protein belongs to the Hfq family. In terms of assembly, homohexamer.

Its function is as follows. RNA chaperone that binds small regulatory RNA (sRNAs) and mRNAs to facilitate mRNA translational regulation in response to envelope stress, environmental stress and changes in metabolite concentrations. Also binds with high specificity to tRNAs. This is RNA-binding protein Hfq from Shewanella denitrificans (strain OS217 / ATCC BAA-1090 / DSM 15013).